Here is a 187-residue protein sequence, read N- to C-terminus: Elongation factor P (187 aa).

This sequence belongs to the elongation factor P family.

The protein localises to the cytoplasm. It functions in the pathway protein biosynthesis; polypeptide chain elongation. Involved in peptide bond synthesis. Stimulates efficient translation and peptide-bond synthesis on native or reconstituted 70S ribosomes in vitro. Probably functions indirectly by altering the affinity of the ribosome for aminoacyl-tRNA, thus increasing their reactivity as acceptors for peptidyl transferase. The chain is Elongation factor P from Rhodospirillum rubrum (strain ATCC 11170 / ATH 1.1.1 / DSM 467 / LMG 4362 / NCIMB 8255 / S1).